A 326-amino-acid chain; its full sequence is F-box/LRR-repeat protein 12 (326 aa).

The F-box domain occupies 1–47 (MATLVELPDSVLLEIFSYLPVRDRIRISRVCHRWKRLVDDRWLWRHV). LRR repeat units follow at residues 51–78 (LYTM…RMGG), 86–111 (APQL…CLHV), 113–133 (DLSM…ELHS), 161–185 (VPAF…VLGG), 186–211 (TYRV…EVLG), 212–236 (CTLS…IRLT), 237–261 (VRGL…CLQG), and 266–291 (PEMP…ELQG).

In terms of assembly, interacts with SKP1 and CUL1.

It participates in protein modification; protein ubiquitination. Functionally, substrate-recognition component of the SCF (SKP1-CUL1-F-box protein)-type E3 ubiquitin ligase complex. Mediates the polyubiquitination and proteasomal degradation of CAMK1 leading to disruption of cyclin D1/CDK4 complex assembly which results in G1 cell cycle arrest in lung epithelia. This is F-box/LRR-repeat protein 12 (FBXL12) from Homo sapiens (Human).